Consider the following 325-residue polypeptide: Elongation factor P--(R)-beta-lysine ligase (325 aa).

Substrate is bound at residue 76-78; it reads SPE. Residues 100-102 and Asn109 contribute to the ATP site; that span reads RNE. Tyr118 is a substrate binding site. 244–245 is a binding site for ATP; the sequence is EL. Glu251 is a binding site for substrate. Position 300 (Gly300) interacts with ATP.

The protein belongs to the class-II aminoacyl-tRNA synthetase family. EpmA subfamily. In terms of assembly, homodimer.

The catalysed reaction is D-beta-lysine + L-lysyl-[protein] + ATP = N(6)-((3R)-3,6-diaminohexanoyl)-L-lysyl-[protein] + AMP + diphosphate + H(+). With EpmB is involved in the beta-lysylation step of the post-translational modification of translation elongation factor P (EF-P). Catalyzes the ATP-dependent activation of (R)-beta-lysine produced by EpmB, forming a lysyl-adenylate, from which the beta-lysyl moiety is then transferred to the epsilon-amino group of a conserved specific lysine residue in EF-P. This is Elongation factor P--(R)-beta-lysine ligase from Proteus mirabilis (strain HI4320).